The primary structure comprises 107 residues: U1-lycotoxin-Ls1g (107 aa).

Positions 1–20 (MMKVLVVVALLVTLISYSSS) are cleaved as a signal peptide. Residues 21–41 (EGIDDLEADELLSLMANEQTR) constitute a propeptide that is removed on maturation. Disulfide bonds link Cys51/Cys68, Cys58/Cys86, and Cys70/Cys84.

This sequence belongs to the neurotoxin 19 (CSTX) family. 04 (U1-Lctx) subfamily. Expressed by the venom gland.

It is found in the secreted. This Lycosa singoriensis (Wolf spider) protein is U1-lycotoxin-Ls1g.